A 428-amino-acid chain; its full sequence is Enolase (428 aa).

Gln-162 contacts (2R)-2-phosphoglycerate. Glu-204 (proton donor) is an active-site residue. Mg(2+) is bound by residues Asp-241, Glu-282, and Asp-309. Residues Lys-334, Arg-363, Ser-364, and Lys-385 each contribute to the (2R)-2-phosphoglycerate site. Residue Lys-334 is the Proton acceptor of the active site.

Belongs to the enolase family. Mg(2+) serves as cofactor.

It localises to the cytoplasm. The protein localises to the secreted. Its subcellular location is the cell surface. It carries out the reaction (2R)-2-phosphoglycerate = phosphoenolpyruvate + H2O. It functions in the pathway carbohydrate degradation; glycolysis; pyruvate from D-glyceraldehyde 3-phosphate: step 4/5. In terms of biological role, catalyzes the reversible conversion of 2-phosphoglycerate (2-PG) into phosphoenolpyruvate (PEP). It is essential for the degradation of carbohydrates via glycolysis. This chain is Enolase, found in Mycobacterium ulcerans (strain Agy99).